The sequence spans 115 residues: Large ribosomal subunit protein bL20 (115 aa).

This sequence belongs to the bacterial ribosomal protein bL20 family.

In terms of biological role, binds directly to 23S ribosomal RNA and is necessary for the in vitro assembly process of the 50S ribosomal subunit. It is not involved in the protein synthesizing functions of that subunit. This Bdellovibrio bacteriovorus (strain ATCC 15356 / DSM 50701 / NCIMB 9529 / HD100) protein is Large ribosomal subunit protein bL20.